The primary structure comprises 317 residues: Ferrochelatase (317 aa).

The Fe cation site is built by histidine 187 and glutamate 268.

Belongs to the ferrochelatase family.

It is found in the cytoplasm. It carries out the reaction heme b + 2 H(+) = protoporphyrin IX + Fe(2+). The protein operates within porphyrin-containing compound metabolism; protoheme biosynthesis; protoheme from protoporphyrin-IX: step 1/1. Its function is as follows. Catalyzes the ferrous insertion into protoporphyrin IX. The chain is Ferrochelatase from Campylobacter concisus (strain 13826).